The following is a 496-amino-acid chain: Lysosomal Pro-X carboxypeptidase (496 aa).

The signal sequence occupies residues Met1 to Ala21. Residues Leu22–Ala45 constitute a propeptide that is removed on maturation. N-linked (GlcNAc...) asparagine glycosylation is found at Asn47 and Asn101. The active-site Charge relay system is Ser179. The interval His194–Tyr334 is SKS domain. 4 disulfides stabilise this stretch: Cys215/Cys372, Cys233/Cys310, Cys264/Cys343, and Cys364/Cys394. Residues Asn317, Asn336, and Asn345 are each glycosylated (N-linked (GlcNAc...) asparagine). N-linked (GlcNAc...) asparagine glycosylation is present at Asn415. Active-site charge relay system residues include Asp430 and His455.

Belongs to the peptidase S28 family. As to quaternary structure, homodimer.

The protein localises to the lysosome. The catalysed reaction is Cleavage of a -Pro-|-Xaa bond to release a C-terminal amino acid.. Functionally, cleaves C-terminal amino acids linked to proline in peptides such as angiotensin II, III and des-Arg9-bradykinin. This cleavage occurs at acidic pH, but enzymatic activity is retained with some substrates at neutral pH. This Pongo abelii (Sumatran orangutan) protein is Lysosomal Pro-X carboxypeptidase (PRCP).